The chain runs to 382 residues: Galactokinase (382 aa).

34–37 contributes to the substrate binding site; sequence EHTD. 124–130 serves as a coordination point for ATP; sequence GAGLSSS. Residues serine 130 and glutamate 162 each contribute to the Mg(2+) site. Residue aspartate 174 is the Proton acceptor of the active site. Tyrosine 223 is a substrate binding site.

It belongs to the GHMP kinase family. GalK subfamily.

The protein resides in the cytoplasm. The catalysed reaction is alpha-D-galactose + ATP = alpha-D-galactose 1-phosphate + ADP + H(+). The protein operates within carbohydrate metabolism; galactose metabolism. In terms of biological role, catalyzes the transfer of the gamma-phosphate of ATP to D-galactose to form alpha-D-galactose-1-phosphate (Gal-1-P). The chain is Galactokinase from Salmonella agona (strain SL483).